The sequence spans 352 residues: MEIVINNISGLNNSFNNNNNSNNNDENEINFNLIKESIVNFKLWDINNKQIEYVCRLGSGSLCRVYKGRLNGKPVAIKVFSPIRFEEFKTEFLMMQSLRSSPFLISFYGVSIVEEPQKQCYCIITEFCSRDSLYHIMTDRLIEIGWNRFFQFSMQIILGLQSLHNRKPKPIVHRDVTSLNILVNEDWECKISNFSASRFNCLNTEYINSNNQNKSFAFCSPESSDFQDIDDDYTSLSSSITSKSDIYSFGIIMFELISRIINGEYSHPFSEFKDIKNDFQLLLSSKNGLRPSLPNICPEPLEKLYKQCVDQSPLNRPSCEEVIISLNQIRSFYLLPQTKKSWDNLVLKNKCK.

In terms of domain architecture, Protein kinase spans 51–333 (IEYVCRLGSG…ISLNQIRSFY (283 aa)). Residues 57–65 (LGSGSLCRV) and K78 contribute to the ATP site. D175 (proton acceptor) is an active-site residue.

The protein belongs to the protein kinase superfamily. TKL Tyr protein kinase family.

The catalysed reaction is L-tyrosyl-[protein] + ATP = O-phospho-L-tyrosyl-[protein] + ADP + H(+). In Dictyostelium discoideum (Social amoeba), this protein is Probable tyrosine-protein kinase DDB_G0290471.